We begin with the raw amino-acid sequence, 175 residues long: Nucleoside-triphosphatase THEP1 (175 aa).

ATP-binding positions include 16 to 23 (GMPGVGKT) and 103 to 110 (VAFIDEIG).

It belongs to the THEP1 NTPase family.

It catalyses the reaction a ribonucleoside 5'-triphosphate + H2O = a ribonucleoside 5'-diphosphate + phosphate + H(+). Its function is as follows. Has nucleotide phosphatase activity towards ATP, GTP, CTP, TTP and UTP. May hydrolyze nucleoside diphosphates with lower efficiency. In Pyrobaculum calidifontis (strain DSM 21063 / JCM 11548 / VA1), this protein is Nucleoside-triphosphatase THEP1.